The chain runs to 68 residues: ATP synthase F(0) complex subunit 8 (68 aa).

The chain crosses the membrane as a helical span at residues 8–24; it reads TWFTTILSMFLTLFIIF. N6-acetyllysine; alternate is present on Lys54. An N6-succinyllysine; alternate modification is found at Lys54. N6-acetyllysine is present on Lys57.

It belongs to the ATPase protein 8 family. In terms of assembly, component of the ATP synthase complex composed at least of ATP5F1A/subunit alpha, ATP5F1B/subunit beta, ATP5MC1/subunit c (homooctomer), MT-ATP6/subunit a, MT-ATP8/subunit 8, ATP5ME/subunit e, ATP5MF/subunit f, ATP5MG/subunit g, ATP5MK/subunit k, ATP5MJ/subunit j, ATP5F1C/subunit gamma, ATP5F1D/subunit delta, ATP5F1E/subunit epsilon, ATP5PF/subunit F6, ATP5PB/subunit b, ATP5PD/subunit d, ATP5PO/subunit OSCP. ATP synthase complex consists of a soluble F(1) head domain (subunits alpha(3) and beta(3)) - the catalytic core - and a membrane F(0) domain - the membrane proton channel (subunits c, a, 8, e, f, g, k and j). These two domains are linked by a central stalk (subunits gamma, delta, and epsilon) rotating inside the F1 region and a stationary peripheral stalk (subunits F6, b, d, and OSCP). Interacts with PRICKLE3.

It localises to the mitochondrion membrane. In terms of biological role, subunit 8, of the mitochondrial membrane ATP synthase complex (F(1)F(0) ATP synthase or Complex V) that produces ATP from ADP in the presence of a proton gradient across the membrane which is generated by electron transport complexes of the respiratory chain. ATP synthase complex consist of a soluble F(1) head domain - the catalytic core - and a membrane F(1) domain - the membrane proton channel. These two domains are linked by a central stalk rotating inside the F(1) region and a stationary peripheral stalk. During catalysis, ATP synthesis in the catalytic domain of F(1) is coupled via a rotary mechanism of the central stalk subunits to proton translocation. In vivo, can only synthesize ATP although its ATP hydrolase activity can be activated artificially in vitro. Part of the complex F(0) domain. The sequence is that of ATP synthase F(0) complex subunit 8 from Hippopotamus amphibius (Hippopotamus).